Consider the following 427-residue polypeptide: Adenylosuccinate synthetase (427 aa).

GTP-binding positions include 12-18 (GDEGKGK) and 40-42 (GHT). Residue Asp-13 is the Proton acceptor of the active site. Mg(2+) contacts are provided by Asp-13 and Gly-40. IMP contacts are provided by residues 13–16 (DEGK), 38–41 (NAGH), Thr-128, Arg-142, Gln-223, Thr-238, and Arg-302. His-41 (proton donor) is an active-site residue. A substrate-binding site is contributed by 298-304 (VTTGRAR). Residues Arg-304, 330–332 (KLD), and 412–414 (GVG) each bind GTP.

Belongs to the adenylosuccinate synthetase family. Homodimer. It depends on Mg(2+) as a cofactor.

The protein resides in the cytoplasm. It carries out the reaction IMP + L-aspartate + GTP = N(6)-(1,2-dicarboxyethyl)-AMP + GDP + phosphate + 2 H(+). Its pathway is purine metabolism; AMP biosynthesis via de novo pathway; AMP from IMP: step 1/2. In terms of biological role, plays an important role in the de novo pathway of purine nucleotide biosynthesis. Catalyzes the first committed step in the biosynthesis of AMP from IMP. This is Adenylosuccinate synthetase from Parafrankia sp. (strain EAN1pec).